The primary structure comprises 145 residues: MNMDFNLFMNDVVRQARQEITAAGYTELKTPEEVDEALTKKGTTLVMVNSVCGCAGGIARPAAHHAVHYDKRPDHLVTVFAGQDKEATARAREYFEGYPPSSPSFALLKDGKILKMVERHEIEGYEPMAVITKLQGLFEEYCEEV.

This sequence belongs to the bacilliredoxin family.

This Bacillus licheniformis (strain ATCC 14580 / DSM 13 / JCM 2505 / CCUG 7422 / NBRC 12200 / NCIMB 9375 / NCTC 10341 / NRRL NRS-1264 / Gibson 46) protein is Bacilliredoxin BLi02578/BL01507.